Here is a 383-residue protein sequence, read N- to C-terminus: Dimethylsulfoniopropionate lyase 6 (383 aa).

This sequence belongs to the aspartate/glutamate racemases family. ALMA1 subfamily. As to quaternary structure, homotetramer.

It carries out the reaction S,S-dimethyl-beta-propiothetin = acrylate + dimethyl sulfide + H(+). In terms of biological role, mediates cleavage of dimethylsulfoniopropionate (DMSP) into dimethyl sulfide (DMS) and acrylate. DMS is the principal form by which sulfur is transported from oceans to the atmosphere and is a key component of the ocean sulfur cycle. The chain is Dimethylsulfoniopropionate lyase 6 from Emiliania huxleyi (strain CCMP1516).